Consider the following 143-residue polypeptide: Large ribosomal subunit protein uL16 (143 aa).

This sequence belongs to the universal ribosomal protein uL16 family. As to quaternary structure, part of the 50S ribosomal subunit.

Binds 23S rRNA and is also seen to make contacts with the A and possibly P site tRNAs. This Thermosynechococcus vestitus (strain NIES-2133 / IAM M-273 / BP-1) protein is Large ribosomal subunit protein uL16.